The following is a 378-amino-acid chain: Putative glutamate--cysteine ligase 2 (378 aa).

Belongs to the glutamate--cysteine ligase type 2 family. YbdK subfamily.

It catalyses the reaction L-cysteine + L-glutamate + ATP = gamma-L-glutamyl-L-cysteine + ADP + phosphate + H(+). In terms of biological role, ATP-dependent carboxylate-amine ligase which exhibits weak glutamate--cysteine ligase activity. This chain is Putative glutamate--cysteine ligase 2, found in Jannaschia sp. (strain CCS1).